Consider the following 393-residue polypeptide: Lipoyl synthase, mitochondrial (393 aa).

The [4Fe-4S] cluster site is built by cysteine 111, cysteine 116, cysteine 122, cysteine 142, cysteine 146, cysteine 149, and serine 357. In terms of domain architecture, Radical SAM core spans 127–346; it reads EHGTQTATIM…ETRGNELGFL (220 aa).

This sequence belongs to the radical SAM superfamily. Lipoyl synthase family. [4Fe-4S] cluster serves as cofactor.

It is found in the mitochondrion. It catalyses the reaction [[Fe-S] cluster scaffold protein carrying a second [4Fe-4S](2+) cluster] + N(6)-octanoyl-L-lysyl-[protein] + 2 oxidized [2Fe-2S]-[ferredoxin] + 2 S-adenosyl-L-methionine + 4 H(+) = [[Fe-S] cluster scaffold protein] + N(6)-[(R)-dihydrolipoyl]-L-lysyl-[protein] + 4 Fe(3+) + 2 hydrogen sulfide + 2 5'-deoxyadenosine + 2 L-methionine + 2 reduced [2Fe-2S]-[ferredoxin]. Its pathway is protein modification; protein lipoylation via endogenous pathway; protein N(6)-(lipoyl)lysine from octanoyl-[acyl-carrier-protein]: step 2/2. Its function is as follows. Catalyzes the radical-mediated insertion of two sulfur atoms into the C-6 and C-8 positions of the octanoyl moiety bound to the lipoyl domains of lipoate-dependent enzymes, thereby converting the octanoylated domains into lipoylated derivatives. This is Lipoyl synthase, mitochondrial from Aedes aegypti (Yellowfever mosquito).